The chain runs to 860 residues: Paladin (860 aa).

Residues 1-24 are disordered; sequence MGTTASAAPQATLHERLHSDSMTD. G2 carries N-myristoyl glycine lipidation. Over residues 13–24 the composition is skewed to basic and acidic residues; the sequence is LHERLHSDSMTD.

This sequence belongs to the paladin family.

It is found in the cytoplasm. It localises to the cytosol. The chain is Paladin (pald1) from Danio rerio (Zebrafish).